The sequence spans 345 residues: Nuclear distribution protein nudE-like 1 (345 aa).

A coiled-coil region spans residues 28-190 (QSFQEARDEL…LAVRERQQEV (163 aa)). The interval 56–166 (VQAEQRNRDL…LDEKESLLVS (111 aa)) is self-association. An interaction with KATNB1 region spans residues 64 to 189 (DLQADNQRLK…ELAVRERQQE (126 aa)). The required for interaction with PAFAH1B1 stretch occupies residues 114-133 (YVRELEQANDDLERAKRATI). The interval 175-345 (RDLRQELAVR…SAPGMLPLSV (171 aa)) is interaction with CENPF. Residues 189 to 256 (EVTRKSAPSS…SARISALNIV (68 aa)) are interaction with YWHAE. The segment at 191–345 (TRKSAPSSPT…SAPGMLPLSV (155 aa)) is interaction with NEFL. Residues 195-256 (APSSPTLDCE…SARISALNIV (62 aa)) form an interaction with KATNA1 region. Residue S215 is modified to Phosphoserine. The interval 217–240 (PATPVGKGTENSFPSPKAIPNGFG) is disordered. T219 bears the Phosphothreonine mark. A Phosphoserine modification is found at S231. The segment at 241–280 (TSPLTPSARISALNIVGDLLRKVGALESKLAACRNFAKDQ) is interaction with DISC1. S242 carries the phosphoserine; by CDK1 modification. Position 245 is a phosphothreonine; by CDK1 and MAPK1 (T245). The interval 256 to 291 (VGDLLRKVGALESKLAACRNFAKDQASRKSYVPGSV) is required for localization to the centrosome and interaction with dynein, dynactin, tubulin gamma, PCM1 and PCNT. The S-palmitoyl cysteine; by ZDHHC2, ZDHHC3 and ZDHHC7 moiety is linked to residue C273. Residues 314-345 (KGAVNGFDPAPPPPGLGSSRPSSAPGMLPLSV) form a disordered region. The span at 329–339 (LGSSRPSSAPG) shows a compositional bias: low complexity. S344 is subject to Phosphoserine.

Belongs to the nudE family. In terms of assembly, interacts with PLEKHM1 (via N- and C-terminus). Interacts with dynactin, PCM1 and PCNT. Interacts (via C-terminus) with CENPF. Self-associates. Interacts with DISC1, dynein, tubulin gamma, KATNA1, KATNB1, microtubules, PAFAHB1 and YWHAE. Interacts directly with NEFL and indirectly with NEFH. Interacts with ZNF365. Interacts with GTP-bound RAB9A; the interaction may lead to RAB9A-dynein motor tethering. Phosphorylated by CDK1 and MAPK1. Phosphorylated in mitosis. Phosphorylated by CDK5. Phosphorylation by CDK5 promotes interaction with KATNA1 and YWHAE. Post-translationally, palmitoylation at Cys-273 reduces affinity for dynein. In terms of tissue distribution, expressed in brain, liver, lung and testis (at protein level). Expressed in brain, epididymis, eye, heart, kidney, large intestine, liver, ovary, pancreas, prostate, skeletal muscle, smooth muscle, spleen, submaxillary gland, testis, thymus and thyroid. Within the brain expression is pronounced in the cortex, hippocampus, olfactory bulb, striatum, thalamic and hypothalamic structures and in the molecular layer of the cerebellum. Largely excluded from cortical progenitor cells which express NDE1.

Its subcellular location is the cytoplasm. It localises to the cytoskeleton. The protein localises to the microtubule organizing center. It is found in the centrosome. The protein resides in the chromosome. Its subcellular location is the centromere. It localises to the kinetochore. The protein localises to the spindle. Required for organization of the cellular microtubule array and microtubule anchoring at the centrosome. May regulate microtubule organization at least in part by targeting the microtubule severing protein KATNA1 to the centrosome. Also positively regulates the activity of the minus-end directed microtubule motor protein dynein. May enhance dynein-mediated microtubule sliding by targeting dynein to the microtubule plus ends. Required for several dynein- and microtubule-dependent processes such as the maintenance of Golgi integrity, the centripetal motion of secretory vesicles and the coupling of the nucleus and centrosome. Also required during brain development for the migration of newly formed neurons from the ventricular/subventricular zone toward the cortical plate. Plays a role, together with DISC1, in the regulation of neurite outgrowth. Required for mitosis in some cell types but appears to be dispensible for mitosis in cortical neuronal progenitors, which instead requires NDE1. Facilitates the polymerization of neurofilaments from the individual subunits NEFH and NEFL. Positively regulates lysosome peripheral distribution and ruffled border formation in osteoclasts. Plays a role, together with DISC1, in the regulation of neurite outgrowth. May act as a RAB9A/B effector that tethers RAB9-associated late endosomes to the dynein motor for their retrograde transport to the trans-Golgi network. The sequence is that of Nuclear distribution protein nudE-like 1 from Mus musculus (Mouse).